Reading from the N-terminus, the 211-residue chain is GTP-binding protein ypt5 (211 aa).

G21 to S28 contacts GTP. The short motif at R43 to F51 is the Effector region element. Residues D70 to Q74 and N128 to D131 contribute to the GTP site. S-geranylgeranyl cysteine attachment occurs at residues C209 and C211. C211 carries the cysteine methyl ester modification.

It belongs to the small GTPase superfamily. Rab family.

It is found in the cell membrane. In terms of biological role, protein transport. Probably involved in vesicular traffic. This is GTP-binding protein ypt5 (ypt5) from Schizosaccharomyces pombe (strain 972 / ATCC 24843) (Fission yeast).